Reading from the N-terminus, the 382-residue chain is Lactaldehyde reductase (382 aa).

Residues Asp38, Asn70, 97–98 (GS), 139–143 (TTAGT), Asn150, Lys161, and 180–184 (MMDGM) contribute to the NAD(+) site. Fe cation is bound by residues Asp195, His199, His262, and His276.

Belongs to the iron-containing alcohol dehydrogenase family. In terms of assembly, homodimer. It depends on Fe cation as a cofactor.

It catalyses the reaction (R)-propane-1,2-diol + NAD(+) = (R)-lactaldehyde + NADH + H(+). It carries out the reaction (S)-propane-1,2-diol + NAD(+) = (S)-lactaldehyde + NADH + H(+). The protein operates within carbohydrate degradation; L-fucose degradation. The polypeptide is Lactaldehyde reductase (fucO) (Escherichia coli O157:H7).